A 643-amino-acid chain; its full sequence is Leukocyte immunoglobulin-like receptor subfamily B member 5 (643 aa).

A signal peptide spans 1–23 (MTLTLSVLICLGLNVGPRTCVQA). Topologically, residues 24-458 (GTLPKPTLWA…PQSGLGRHLG (435 aa)) are extracellular. 4 consecutive Ig-like C2-type domains span residues 27–116 (PKPT…LELV), 111–228 (DPLE…SLLI), 224–313 (PSLL…DPLD), and 337–418 (GENV…LVVS). Cys-49 and Cys-98 are disulfide-bonded. An N-linked (GlcNAc...) asparagine glycan is attached at Asn-139. Disulfide bonds link Cys-144-Cys-195 and Cys-244-Cys-295. N-linked (GlcNAc...) asparagine glycans are attached at residues Asn-279 and Asn-339. Cysteines 344 and 395 form a disulfide. Positions 417–433 (VSGPSGDPSLSPTGSTP) are enriched in low complexity. The tract at residues 417–449 (VSGPSGDPSLSPTGSTPTPGPEDQPLTPTGLDP) is disordered. Residues 459–479 (VVTGVSVAFVLLLFLLLFLLL) form a helical membrane-spanning segment. The Cytoplasmic portion of the chain corresponds to 480–643 (RHRHQSKHRT…PSIYAPLAIH (164 aa)). The tract at residues 493-643 (FYRPAGAAGP…PSIYAPLAIH (151 aa)) is disordered. Ser-514 carries the phosphoserine modification. Composition is skewed to basic and acidic residues over residues 531–549 (TQPKDGAEMDARQSPRDED), 557–567 (EVKHSRPRREM), and 579–592 (LDTKDTQAEEDRQM). An ITIM motif 1 motif is present at residues 605-610 (VTYAQL). Positions 615-631 (LRREATEPPPSQEREPP) are enriched in basic and acidic residues. The short motif at 635–640 (SIYAPL) is the ITIM motif 2 element.

The protein localises to the membrane. Its function is as follows. May act as receptor for class I MHC antigens. The sequence is that of Leukocyte immunoglobulin-like receptor subfamily B member 5 (LILRB5) from Pan troglodytes (Chimpanzee).